We begin with the raw amino-acid sequence, 124 residues long: Small ribosomal subunit protein uS12 (124 aa).

At aspartate 89 the chain carries 3-methylthioaspartic acid.

Belongs to the universal ribosomal protein uS12 family. Part of the 30S ribosomal subunit. Contacts proteins S8 and S17. May interact with IF1 in the 30S initiation complex.

With S4 and S5 plays an important role in translational accuracy. Functionally, interacts with and stabilizes bases of the 16S rRNA that are involved in tRNA selection in the A site and with the mRNA backbone. Located at the interface of the 30S and 50S subunits, it traverses the body of the 30S subunit contacting proteins on the other side and probably holding the rRNA structure together. The combined cluster of proteins S8, S12 and S17 appears to hold together the shoulder and platform of the 30S subunit. This is Small ribosomal subunit protein uS12 from Photobacterium profundum (strain SS9).